A 460-amino-acid chain; its full sequence is Cysteine--tRNA ligase (460 aa).

Zn(2+) is bound at residue cysteine 28. The short motif at 30 to 40 (MTVYDYCHLGH) is the 'HIGH' region element. Positions 209, 234, and 238 each coordinate Zn(2+). Positions 266 to 270 (KMSKS) match the 'KMSKS' region motif. ATP is bound at residue lysine 269.

Belongs to the class-I aminoacyl-tRNA synthetase family. Monomer. It depends on Zn(2+) as a cofactor.

The protein localises to the cytoplasm. It catalyses the reaction tRNA(Cys) + L-cysteine + ATP = L-cysteinyl-tRNA(Cys) + AMP + diphosphate. The protein is Cysteine--tRNA ligase of Pseudomonas syringae pv. tomato (strain ATCC BAA-871 / DC3000).